The following is a 397-amino-acid chain: MKTRKSHPIKRFFEQETAGGILLIVAAALAMLLANSPFYGHYDLLIDTPFIISLGDFALEKPLLLWTNDGLMAVFFLLVGLELKRELLEGELSDPRKIALPAVGAIGGMLVPALIYWWINKDNPLALSGWAIPAATDIAFALGVLALLGSRVPVTVKIFLTSIAVFDDIGAILIIAFFYTSKISMLALVVAAICCAILFICNRSGVTTLRAYLLIGLVMWVALLKSGVHATLGGVILAFFIPMTAARPHPEIKIPSPLKFLEHELHAPVAFLILPIFAFANSGIRFIGMGVEDFTHSVPVGIASGLFFGKQLGVFLFCGVCVLFGWLKLPKGMRWVHLYGVAVLCGIGFTMSLFIGSLAFQESGINSVIDERLGIVFGSLVSAVLGFVVLRSAKQKA.

A run of 11 helical transmembrane segments spans residues 18–38, 63–83, 98–118, 129–149, 158–178, 181–201, 207–224, 269–289, 306–326, 340–360, and 373–393; these read AGGILLIVAAALAMLLANSPF, LLLWTNDGLMAVFFLLVGLEL, IALPAVGAIGGMLVPALIYWW, GWAIPAATDIAFALGVLALLG, IFLTSIAVFDDIGAILIIAFF, SKISMLALVVAAICCAILFIC, TTLRAYLLIGLVMWVALL, VAFLILPIFAFANSGIRFIGM, LFFGKQLGVFLFCGVCVLFGW, GVAVLCGIGFTMSLFIGSLAF, and LGIVFGSLVSAVLGFVVLRSA.

It belongs to the NhaA Na(+)/H(+) (TC 2.A.33) antiporter family.

It localises to the cell inner membrane. It catalyses the reaction Na(+)(in) + 2 H(+)(out) = Na(+)(out) + 2 H(+)(in). Na(+)/H(+) antiporter that extrudes sodium in exchange for external protons. This Saccharophagus degradans (strain 2-40 / ATCC 43961 / DSM 17024) protein is Na(+)/H(+) antiporter NhaA 3.